Reading from the N-terminus, the 290-residue chain is tRNA (guanine-N(7)-)-methyltransferase (290 aa).

Composition is skewed to basic and acidic residues over residues 1-12 and 20-43; these read MSDSLHTPEEPR and AHAH…DGPK. The interval 1 to 49 is disordered; the sequence is MSDSLHTPEEPRPGPGEQLAHAHDGSLRHTRAKGEPRFPDGPKADPAGS. The S-adenosyl-L-methionine site is built by E104, D129, D156, and D179. Residue D179 is part of the active site. Substrate-binding positions include K183, D215, and 252–255; that span reads TRFE.

Belongs to the class I-like SAM-binding methyltransferase superfamily. TrmB family.

It carries out the reaction guanosine(46) in tRNA + S-adenosyl-L-methionine = N(7)-methylguanosine(46) in tRNA + S-adenosyl-L-homocysteine. It participates in tRNA modification; N(7)-methylguanine-tRNA biosynthesis. Functionally, catalyzes the formation of N(7)-methylguanine at position 46 (m7G46) in tRNA. In Streptomyces avermitilis (strain ATCC 31267 / DSM 46492 / JCM 5070 / NBRC 14893 / NCIMB 12804 / NRRL 8165 / MA-4680), this protein is tRNA (guanine-N(7)-)-methyltransferase.